A 247-amino-acid polypeptide reads, in one-letter code: F-box and leucine-rich protein 22 (247 aa).

One can recognise an F-box domain in the interval 6-52 (TMHITQLNRECLLHLFSFLDKDSRKSLARTCSQLHDVFEDPALWSLL). Disordered regions lie at residues 124 to 154 (SPRR…PDHS) and 173 to 247 (GLGS…AFPQ). Over residues 184-200 (ETPPAPGVSWGPPPPGA) the composition is skewed to pro residues.

As to quaternary structure, directly interacts with SKP1 and CUL1. Enriched in cardiac muscle.

It localises to the cytoplasm. The protein resides in the myofibril. It is found in the sarcomere. Its subcellular location is the z line. It functions in the pathway protein modification; protein ubiquitination. Substrate-recognition component of the SCF (SKP1-CUL1-F-box protein)-type E3 ubiquitin ligase complex. Promotes ubiquitination of sarcomeric proteins alpha-actinin-2 (ACTN2) and filamin-C (FLNC). In Homo sapiens (Human), this protein is F-box and leucine-rich protein 22 (FBXL22).